The sequence spans 590 residues: DNA primase (590 aa).

A CHC2-type zinc finger spans residues 37–61 (CPFHKEKTPSFSVSPTKQFYHCFSC). The Toprim domain maps to 255-337 (GRILVVEGYM…DKSLHFLFLP (83 aa)). Glutamate 261, aspartate 305, and aspartate 307 together coordinate Mg(2+).

It belongs to the DnaG primase family. In terms of assembly, monomer. Interacts with DnaB. Zn(2+) is required as a cofactor. Requires Mg(2+) as cofactor.

It catalyses the reaction ssDNA + n NTP = ssDNA/pppN(pN)n-1 hybrid + (n-1) diphosphate.. RNA polymerase that catalyzes the synthesis of short RNA molecules used as primers for DNA polymerase during DNA replication. The polypeptide is DNA primase (Neisseria meningitidis serogroup A / serotype 4A (strain DSM 15465 / Z2491)).